Here is a 518-residue protein sequence, read N- to C-terminus: uncharacterized protein (518 aa).

The protein belongs to the MG032/MG096/MG288 family.

This is an uncharacterized protein from Mycoplasma pneumoniae (strain ATCC 29342 / M129 / Subtype 1) (Mycoplasmoides pneumoniae).